Reading from the N-terminus, the 954-residue chain is MTELLQSLSTQNEFVARHNGPNKSDQQKMLEAINAVSLDSLIDETVPAQIRLEQPMNLAEAKSEADMLAAMRKFADQNQIKRTFIGQGYYNTFTPNVILRNVMENPGWYTAYTPYQPEISQGRLESLLNYQQMVMDLTGMEIANASLLDEATAAAEAMTLCKRAGKSKSNVFFVADDVHPQTIEVVKTRAKFIGFEVLVGALDSLPEQDVFGALVQYPGTTGEVRDLTDLIAKAQANKTLVTVATDLLASALLKPAGEMGADVAIGSAQRFGVPMGYGGPHAAFMATRDKHKRTMPGRVIGVSIDTNGNQALRMAMQTREQHIRREKATSNICTAQALLANMASFYAVFHGAEGLRTIARRTHHMTAILAAGLTKGGFELAHNSFFDTITINTGAQTEDLYAKALAADINLRKLGTQLGVSFDETTTVADVEALFAVFGVKEEVAALSTEIAGNEFAAIPEALRRTTEYLTHPVFNTHHSETQMMRYLKQLENKDFSLTHGMIPLGSCTMKLNAAAEMIPVTWPEFGSIHPFAPADQAAGYAALAKDLKEKLCEITGYDAFSLQPNSGASGEYAGLIAIQRYHESRGEGHRNVCLIPSSAHGTNPATASMVSMKVVVVKCDEEGNIDVTDLAAKIKKHKDNLSSIMITYPSTHGVYEEQVKEVCEMVHAAGGQVYLDGANMNAQVGLTTPGFIGSDVSHLNLHKTFCIPHGGGGPGMGPIGVKSHLAPFLPGHIENGADGENFAVSAADMGSASILPISWAYIAMMGEAGLTDATKVAILNANYVMEQLRPHYPVLYRGSNGRVAHECIIDIRPLKEETGISEEDIAKRLMDYGFHAPTMSFPVAGTLMVEPTESEDLEELDRFCDAMIAIREEMTKVKNGEWPLDNNPLVNAPHTQFDLAKEEWDRPYSRELGCFPSKATKSWKYWPTVNRVDNVYGDRNLICSCPSIDNYED.

The span at 1–13 (MTELLQSLSTQNE) shows a compositional bias: polar residues. The disordered stretch occupies residues 1–24 (MTELLQSLSTQNEFVARHNGPNKS). K704 carries the post-translational modification N6-(pyridoxal phosphate)lysine.

The protein belongs to the GcvP family. In terms of assembly, the glycine cleavage system is composed of four proteins: P, T, L and H. It depends on pyridoxal 5'-phosphate as a cofactor.

It carries out the reaction N(6)-[(R)-lipoyl]-L-lysyl-[glycine-cleavage complex H protein] + glycine + H(+) = N(6)-[(R)-S(8)-aminomethyldihydrolipoyl]-L-lysyl-[glycine-cleavage complex H protein] + CO2. Its function is as follows. The glycine cleavage system catalyzes the degradation of glycine. The P protein binds the alpha-amino group of glycine through its pyridoxal phosphate cofactor; CO(2) is released and the remaining methylamine moiety is then transferred to the lipoamide cofactor of the H protein. This is Glycine dehydrogenase (decarboxylating) from Vibrio campbellii (strain ATCC BAA-1116).